Here is a 573-residue protein sequence, read N- to C-terminus: Arginine--tRNA ligase (573 aa).

Residues 122 to 132 carry the 'HIGH' region motif; that stretch reads PNLAKEMHVGH.

Belongs to the class-I aminoacyl-tRNA synthetase family. In terms of assembly, monomer.

It is found in the cytoplasm. It catalyses the reaction tRNA(Arg) + L-arginine + ATP = L-arginyl-tRNA(Arg) + AMP + diphosphate. This Laribacter hongkongensis (strain HLHK9) protein is Arginine--tRNA ligase.